The chain runs to 98 residues: Histone H4-like protein type G (98 aa).

Residues 17–21 (KCHRK) mediate DNA binding.

This sequence belongs to the histone H4 family. As to quaternary structure, the nucleosome is a histone octamer containing two molecules each of H2A, H2B, H3 and H4 assembled in one H3-H4 heterotetramer and two H2A-H2B heterodimers. The octamer wraps approximately 147 bp of DNA.

The protein localises to the nucleus. It localises to the chromosome. Core component of nucleosome. Nucleosomes wrap and compact DNA into chromatin, limiting DNA accessibility to the cellular machineries which require DNA as a template. Histones thereby play a central role in transcription regulation, DNA repair, DNA replication and chromosomal stability. DNA accessibility is regulated via a complex set of post-translational modifications of histones, also called histone code, and nucleosome remodeling. This chain is Histone H4-like protein type G, found in Homo sapiens (Human).